The primary structure comprises 257 residues: Probable enoyl-CoA hydratase (257 aa).

The protein belongs to the enoyl-CoA hydratase/isomerase family.

It catalyses the reaction a (3S)-3-hydroxyacyl-CoA = a (2E)-enoyl-CoA + H2O. It carries out the reaction a 4-saturated-(3S)-3-hydroxyacyl-CoA = a (3E)-enoyl-CoA + H2O. Could possibly oxidize fatty acids using specific components. The polypeptide is Probable enoyl-CoA hydratase (fadB1) (Rhizobium meliloti (strain 1021) (Ensifer meliloti)).